Reading from the N-terminus, the 567-residue chain is Dihydroxy-acid dehydratase (567 aa).

[2Fe-2S] cluster is bound at residue Cys-52. Residue Asp-84 participates in Mg(2+) binding. [2Fe-2S] cluster is bound at residue Cys-125. Mg(2+) contacts are provided by Asp-126 and Lys-127. Lys-127 carries the N6-carboxylysine modification. [2Fe-2S] cluster is bound at residue Cys-197. Glu-448 contacts Mg(2+). Ser-474 (proton acceptor) is an active-site residue.

Belongs to the IlvD/Edd family. In terms of assembly, homodimer. It depends on [2Fe-2S] cluster as a cofactor. Mg(2+) serves as cofactor.

It catalyses the reaction (2R)-2,3-dihydroxy-3-methylbutanoate = 3-methyl-2-oxobutanoate + H2O. It carries out the reaction (2R,3R)-2,3-dihydroxy-3-methylpentanoate = (S)-3-methyl-2-oxopentanoate + H2O. Its pathway is amino-acid biosynthesis; L-isoleucine biosynthesis; L-isoleucine from 2-oxobutanoate: step 3/4. It participates in amino-acid biosynthesis; L-valine biosynthesis; L-valine from pyruvate: step 3/4. Functions in the biosynthesis of branched-chain amino acids. Catalyzes the dehydration of (2R,3R)-2,3-dihydroxy-3-methylpentanoate (2,3-dihydroxy-3-methylvalerate) into 2-oxo-3-methylpentanoate (2-oxo-3-methylvalerate) and of (2R)-2,3-dihydroxy-3-methylbutanoate (2,3-dihydroxyisovalerate) into 2-oxo-3-methylbutanoate (2-oxoisovalerate), the penultimate precursor to L-isoleucine and L-valine, respectively. The sequence is that of Dihydroxy-acid dehydratase from Streptococcus pneumoniae serotype 2 (strain D39 / NCTC 7466).